The following is an 87-amino-acid chain: Putative regulatory protein GK1166 (87 aa).

Belongs to the RemA family.

The chain is Putative regulatory protein GK1166 from Geobacillus kaustophilus (strain HTA426).